The sequence spans 440 residues: Ribosomal protein uS12 methylthiotransferase RimO (440 aa).

Residues 7-117 enclose the MTTase N-terminal domain; the sequence is PKISFVSLGC…VLDAVHRALP (111 aa). Positions 16, 52, 81, 148, 152, and 155 each coordinate [4Fe-4S] cluster. The Radical SAM core domain occupies 134-370; sequence LTPRHYAYLK…MARQQKISAQ (237 aa). Positions 373-439 constitute a TRAM domain; sequence KRKVGTRQQV…EYDLHGSVAG (67 aa).

The protein belongs to the methylthiotransferase family. RimO subfamily. [4Fe-4S] cluster is required as a cofactor.

It is found in the cytoplasm. It catalyses the reaction L-aspartate(89)-[ribosomal protein uS12]-hydrogen + (sulfur carrier)-SH + AH2 + 2 S-adenosyl-L-methionine = 3-methylsulfanyl-L-aspartate(89)-[ribosomal protein uS12]-hydrogen + (sulfur carrier)-H + 5'-deoxyadenosine + L-methionine + A + S-adenosyl-L-homocysteine + 2 H(+). Its function is as follows. Catalyzes the methylthiolation of an aspartic acid residue of ribosomal protein uS12. This is Ribosomal protein uS12 methylthiotransferase RimO from Afipia carboxidovorans (strain ATCC 49405 / DSM 1227 / KCTC 32145 / OM5) (Oligotropha carboxidovorans).